Here is a 384-residue protein sequence, read N- to C-terminus: Probable protein phosphatase 2C 48 (384 aa).

The PPM-type phosphatase domain maps to 47–358 (ITGEFSMAVV…DDITVIVVFL (312 aa)). The residue at position 78 (Ser-78) is a Phosphoserine. Residues Asp-89, Gly-90, Asp-290, and Asp-349 each coordinate Mn(2+).

The protein belongs to the PP2C family. Requires Mg(2+) as cofactor. Mn(2+) is required as a cofactor.

The catalysed reaction is O-phospho-L-seryl-[protein] + H2O = L-seryl-[protein] + phosphate. It catalyses the reaction O-phospho-L-threonyl-[protein] + H2O = L-threonyl-[protein] + phosphate. Its function is as follows. May dephosphorylate and repress plasma membrane H(+)-ATPases (PM H(+)-ATPases, e.g. AHA1 and AHA2), thus influencing negatively plant growth and fitness. The protein is Probable protein phosphatase 2C 48 of Arabidopsis thaliana (Mouse-ear cress).